A 319-amino-acid polypeptide reads, in one-letter code: Lipoyl synthase (319 aa).

Residues 1 to 12 (MVTIVDTLSNTP) show a composition bias toward polar residues. The segment at 1–32 (MVTIVDTLSNTPLRPRHPEKANRPDSISPAKP) is disordered. [4Fe-4S] cluster contacts are provided by cysteine 61, cysteine 66, cysteine 72, cysteine 87, cysteine 91, cysteine 94, and serine 300. Residues 73–289 (WDKKHATFMI…ETVAYTKGFL (217 aa)) enclose the Radical SAM core domain.

The protein belongs to the radical SAM superfamily. Lipoyl synthase family. [4Fe-4S] cluster is required as a cofactor.

The protein localises to the cytoplasm. It catalyses the reaction [[Fe-S] cluster scaffold protein carrying a second [4Fe-4S](2+) cluster] + N(6)-octanoyl-L-lysyl-[protein] + 2 oxidized [2Fe-2S]-[ferredoxin] + 2 S-adenosyl-L-methionine + 4 H(+) = [[Fe-S] cluster scaffold protein] + N(6)-[(R)-dihydrolipoyl]-L-lysyl-[protein] + 4 Fe(3+) + 2 hydrogen sulfide + 2 5'-deoxyadenosine + 2 L-methionine + 2 reduced [2Fe-2S]-[ferredoxin]. It functions in the pathway protein modification; protein lipoylation via endogenous pathway; protein N(6)-(lipoyl)lysine from octanoyl-[acyl-carrier-protein]: step 2/2. Catalyzes the radical-mediated insertion of two sulfur atoms into the C-6 and C-8 positions of the octanoyl moiety bound to the lipoyl domains of lipoate-dependent enzymes, thereby converting the octanoylated domains into lipoylated derivatives. The chain is Lipoyl synthase from Bradyrhizobium sp. (strain BTAi1 / ATCC BAA-1182).